The chain runs to 1093 residues: Protein translocase subunit SecA (1093 aa).

ATP is bound by residues glutamine 84, 102–106 (GEGKT), and aspartate 491. Disordered regions lie at residues 837–869 (QNLQ…SEHE) and 904–1062 (SELE…TSEA). 3 stretches are compositionally biased toward basic and acidic residues: residues 904–937 (SELE…DATK), 944–971 (EELK…EKLK), and 978–1062 (PKDL…TSEA).

Belongs to the SecA family. As to quaternary structure, monomer and homodimer. Part of the essential Sec protein translocation apparatus which comprises SecA, SecYEG and auxiliary proteins SecDF. Other proteins may also be involved.

It is found in the cell membrane. The protein resides in the cytoplasm. The enzyme catalyses ATP + H2O + cellular proteinSide 1 = ADP + phosphate + cellular proteinSide 2.. In terms of biological role, part of the Sec protein translocase complex. Interacts with the SecYEG preprotein conducting channel. Has a central role in coupling the hydrolysis of ATP to the transfer of proteins into and across the cell membrane, serving as an ATP-driven molecular motor driving the stepwise translocation of polypeptide chains across the membrane. This chain is Protein translocase subunit SecA, found in Mycoplasmopsis synoviae (strain 53) (Mycoplasma synoviae).